The chain runs to 159 residues: Aspartate carbamoyltransferase regulatory chain (159 aa).

Residues cysteine 108, cysteine 113, cysteine 138, and cysteine 141 each coordinate Zn(2+).

Belongs to the PyrI family. As to quaternary structure, contains catalytic and regulatory chains. Zn(2+) is required as a cofactor.

Involved in allosteric regulation of aspartate carbamoyltransferase. The polypeptide is Aspartate carbamoyltransferase regulatory chain (Thermofilum pendens (strain DSM 2475 / Hrk 5)).